The chain runs to 96 residues: Aspartyl/glutamyl-tRNA(Asn/Gln) amidotransferase subunit C (96 aa).

This sequence belongs to the GatC family. In terms of assembly, heterotrimer of A, B and C subunits.

It carries out the reaction L-glutamyl-tRNA(Gln) + L-glutamine + ATP + H2O = L-glutaminyl-tRNA(Gln) + L-glutamate + ADP + phosphate + H(+). The enzyme catalyses L-aspartyl-tRNA(Asn) + L-glutamine + ATP + H2O = L-asparaginyl-tRNA(Asn) + L-glutamate + ADP + phosphate + 2 H(+). Functionally, allows the formation of correctly charged Asn-tRNA(Asn) or Gln-tRNA(Gln) through the transamidation of misacylated Asp-tRNA(Asn) or Glu-tRNA(Gln) in organisms which lack either or both of asparaginyl-tRNA or glutaminyl-tRNA synthetases. The reaction takes place in the presence of glutamine and ATP through an activated phospho-Asp-tRNA(Asn) or phospho-Glu-tRNA(Gln). The chain is Aspartyl/glutamyl-tRNA(Asn/Gln) amidotransferase subunit C from Trichormus variabilis (strain ATCC 29413 / PCC 7937) (Anabaena variabilis).